The chain runs to 238 residues: tRNA (guanine-N(1)-)-methyltransferase (238 aa).

Residues G110 and 129–134 each bind S-adenosyl-L-methionine; that span reads LGDFIL.

This sequence belongs to the RNA methyltransferase TrmD family. As to quaternary structure, homodimer.

Its subcellular location is the cytoplasm. It carries out the reaction guanosine(37) in tRNA + S-adenosyl-L-methionine = N(1)-methylguanosine(37) in tRNA + S-adenosyl-L-homocysteine + H(+). In terms of biological role, specifically methylates guanosine-37 in various tRNAs. The polypeptide is tRNA (guanine-N(1)-)-methyltransferase (Clostridium botulinum (strain Eklund 17B / Type B)).